Reading from the N-terminus, the 133-residue chain is Profilin-3 (133 aa).

The cysteines at positions 13 and 117 are disulfide-linked. Positions 83-99 match the Involved in PIP2 interaction motif; it reads AVIRGKKGSGGITIKKT. Thr-113 carries the phosphothreonine modification.

Belongs to the profilin family. In terms of assembly, occurs in many kinds of cells as a complex with monomeric actin in a 1:1 ratio. Phosphorylated by MAP kinases.

Its subcellular location is the cytoplasm. It localises to the cytoskeleton. Its function is as follows. Binds to actin and affects the structure of the cytoskeleton. At high concentrations, profilin prevents the polymerization of actin, whereas it enhances it at low concentrations. The sequence is that of Profilin-3 from Corylus avellana (European hazel).